A 309-amino-acid polypeptide reads, in one-letter code: Olfactory receptor 5H17 (309 aa).

Residues 1–28 are Extracellular-facing; sequence MEKKNETLWTEFVLTGLTCLPQWKPLLF. A glycan (N-linked (GlcNAc...) asparagine) is linked at Asn5. A helical transmembrane segment spans residues 29–49; that stretch reads LVFLVIYFMTIVGNLGLITLI. Residues 50 to 56 lie on the Cytoplasmic side of the membrane; sequence WNDPHLH. A helical transmembrane segment spans residues 57–77; the sequence is IPMYLFLSNLAFVDTWLSSTV. The Extracellular segment spans residues 78-93; it reads TPRMLFNLLDKGKVIS. A helical membrane pass occupies residues 94–114; the sequence is VAECKTQFFSFAISVTTECFL. Cys97 and Cys189 are joined by a disulfide. Residues 115–144 lie on the Cytoplasmic side of the membrane; sequence LAAMAYDRYAAICNPLLYPVIMTNRLCVRL. The chain crosses the membrane as a helical span at residues 145-165; it reads LALSFIGGFLHAVIHESFLSR. Topologically, residues 166-198 are extracellular; sequence LTFCNSNIIYHFYCDVIPLLKISCTDPSLNYLI. The helical transmembrane segment at 199-219 threads the bilayer; the sequence is IFIFSGSIQVFTIMTVLISYT. The Cytoplasmic segment spans residues 220 to 239; sequence FVLFTILKKKSDKGIRKAFS. The chain crosses the membrane as a helical span at residues 240–260; that stretch reads TCGAHLLSVSLYYGPLLFMYV. Over 261–271 the chain is Extracellular; that stretch reads HPASSEVDDQD. Residues 272-292 form a helical membrane-spanning segment; the sequence is MILSLFYTVIIPVLNPIIYSL. The Cytoplasmic portion of the chain corresponds to 293 to 309; sequence RNKQVIDSLKKMLKMMV.

The protein belongs to the G-protein coupled receptor 1 family.

The protein resides in the cell membrane. Potential odorant receptor. This Mus musculus (Mouse) protein is Olfactory receptor 5H17.